The following is a 31-amino-acid chain: Unknown protein from spot 104 of 2D-PAGE of thylakoid (31 aa).

Its subcellular location is the plastid. It is found in the chloroplast thylakoid. The polypeptide is Unknown protein from spot 104 of 2D-PAGE of thylakoid (Pisum sativum (Garden pea)).